The chain runs to 408 residues: GTPase Obg (408 aa).

One can recognise an Obg domain in the interval 1–159 (MKFFDEARIE…RNLHLELKVL (159 aa)). In terms of domain architecture, OBG-type G spans 160–334 (ADVGLLGMPN…LIFALQDFLD (175 aa)). GTP-binding positions include 166–173 (GMPNAGKS), 191–195 (FTTLQ), 213–216 (DIPG), 284–287 (NKLD), and 315–317 (SAL). Mg(2+) contacts are provided by serine 173 and threonine 193. Positions 385-408 (AEDALAEDALDDDADGEDADPNAR) are disordered.

It belongs to the TRAFAC class OBG-HflX-like GTPase superfamily. OBG GTPase family. As to quaternary structure, monomer. The cofactor is Mg(2+).

The protein resides in the cytoplasm. An essential GTPase which binds GTP, GDP and possibly (p)ppGpp with moderate affinity, with high nucleotide exchange rates and a fairly low GTP hydrolysis rate. Plays a role in control of the cell cycle, stress response, ribosome biogenesis and in those bacteria that undergo differentiation, in morphogenesis control. The protein is GTPase Obg of Azoarcus sp. (strain BH72).